The chain runs to 267 residues: Trehalose 2-sulfotransferase (267 aa).

Residues glutamine 14, 33–39 (EPQEFFQ), proline 48, and tryptophan 53 contribute to the alpha,alpha-trehalose site. The active-site Proton acceptor is the glutamate 36.

This sequence belongs to the Stf0 sulfotransferase family. Homodimer.

The enzyme catalyses alpha,alpha-trehalose + 3'-phosphoadenylyl sulfate = 2-O-sulfo-alpha,alpha-trehalose + adenosine 3',5'-bisphosphate + H(+). Its pathway is glycolipid metabolism. Its function is as follows. Catalyzes the sulfuryl group transfer from 3'-phosphoadenosine-5'-phosphosulfate (PAPS) to trehalose, leading to trehalose-2-sulfate (T2S). The sulfation of trehalose is the first step in the biosynthesis of sulfolipid-1 (SL-1), a major cell wall glycolipid in pathogenic mycobacteria. Cannot use free glucose and unnatural stereoisomers of trehalose (alpha,beta (neo-trehalose) and beta,beta (iso-trehalose)) as substrates. The polypeptide is Trehalose 2-sulfotransferase (Mycolicibacterium smegmatis (strain ATCC 700084 / mc(2)155) (Mycobacterium smegmatis)).